Consider the following 256-residue polypeptide: Signal peptidase I (256 aa).

Active-site residues include serine 32 and lysine 75.

This sequence belongs to the peptidase S26 family.

It carries out the reaction Cleavage of hydrophobic, N-terminal signal or leader sequences from secreted and periplasmic proteins.. The protein is Signal peptidase I (lepB) of Aquifex aeolicus (strain VF5).